A 611-amino-acid polypeptide reads, in one-letter code: 1,4-alpha-glucan branching enzyme GlgB (611 aa).

The active-site Nucleophile is the Asp-302. Glu-343 acts as the Proton donor in catalysis.

Belongs to the glycosyl hydrolase 13 family. GlgB subfamily. As to quaternary structure, monomer.

The catalysed reaction is Transfers a segment of a (1-&gt;4)-alpha-D-glucan chain to a primary hydroxy group in a similar glucan chain.. The protein operates within glycan biosynthesis; glycogen biosynthesis. Catalyzes the formation of the alpha-1,6-glucosidic linkages in glycogen by scission of a 1,4-alpha-linked oligosaccharide from growing alpha-1,4-glucan chains and the subsequent attachment of the oligosaccharide to the alpha-1,6 position. The sequence is that of 1,4-alpha-glucan branching enzyme GlgB from Fusobacterium nucleatum subsp. nucleatum (strain ATCC 25586 / DSM 15643 / BCRC 10681 / CIP 101130 / JCM 8532 / KCTC 2640 / LMG 13131 / VPI 4355).